Here is a 67-residue protein sequence, read N- to C-terminus: Large ribosomal subunit protein uL30 (67 aa).

It belongs to the universal ribosomal protein uL30 family. Part of the 50S ribosomal subunit.

The protein is Large ribosomal subunit protein uL30 of Sorangium cellulosum (strain So ce56) (Polyangium cellulosum (strain So ce56)).